Reading from the N-terminus, the 267-residue chain is MSGQELVTLNVGGKVFTTRSSTLQQFPGSRLMRMLDGRDKEFKMVDGQIFVDRDGVLFSFILDFLRTQQLLLPTDFSDHLRLQREALFYELNPLVDLLNQEHKLQPRPALVEVHFLSRNTQAFFRVFGSCSKTIEMLTGRITVFIEQPSAPASSSNSFPQMTLLPLPPQRPSYHDLVFQCGSDSTTDNQTRIRYISIKPDNRKLANGTNVLGLLIDTLLMEGFHLVGTRTVSSEDRTECYSFERIKKPDALAMNKTLKSETTLMPEQ.

Positions 5 to 74 constitute a BTB domain; the sequence is ELVTLNVGGK…LRTQQLLLPT (70 aa).

In terms of assembly, can form homooligomers. Interacts with KCNA1 (via cytoplasmic N-terminal domain) and KCNA4.

The protein resides in the endoplasmic reticulum. Inhibits potassium fluxes in cells. May regulate Kv1 family channel proteins by retaining a fraction of channels in endomembranes. The sequence is that of Potassium channel regulatory protein (KCNRG) from Bos taurus (Bovine).